The primary structure comprises 68 residues: Large ribosomal subunit protein uL29 (68 aa).

Belongs to the universal ribosomal protein uL29 family.

The sequence is that of Large ribosomal subunit protein uL29 from Streptococcus thermophilus (strain ATCC BAA-250 / LMG 18311).